A 283-amino-acid polypeptide reads, in one-letter code: Putative 4-diphosphocytidyl-2-C-methyl-D-erythritol kinase (283 aa).

Residue Lys-10 is part of the active site. 94–104 (PVCAGLGGGST) is an ATP binding site. The active site involves Asp-136.

It belongs to the GHMP kinase family. IspE subfamily.

It catalyses the reaction 4-CDP-2-C-methyl-D-erythritol + ATP = 4-CDP-2-C-methyl-D-erythritol 2-phosphate + ADP + H(+). Its function is as follows. Catalyzes the phosphorylation of the position 2 hydroxy group of 4-diphosphocytidyl-2C-methyl-D-erythritol. This is Putative 4-diphosphocytidyl-2-C-methyl-D-erythritol kinase (ispE) from Streptococcus agalactiae serotype Ia (strain ATCC 27591 / A909 / CDC SS700).